The primary structure comprises 610 residues: Replication factor C large subunit (610 aa).

Position 55 to 62 (55 to 62 (GPAGIGKT)) interacts with ATP. Composition is skewed to basic and acidic residues over residues 467 to 478 (EKEGNASAEKPE), 502 to 515 (LPEK…KLPE), and 594 to 603 (DGSKKAEPKN). The tract at residues 467–610 (EKEGNASAEK…PKNQKTLFDF (144 aa)) is disordered.

It belongs to the activator 1 small subunits family. RfcL subfamily. In terms of assembly, heteromultimer composed of small subunits (RfcS) and large subunits (RfcL).

Its function is as follows. Part of the RFC clamp loader complex which loads the PCNA sliding clamp onto DNA. This chain is Replication factor C large subunit, found in Methanosarcina mazei (strain ATCC BAA-159 / DSM 3647 / Goe1 / Go1 / JCM 11833 / OCM 88) (Methanosarcina frisia).